The following is a 174-amino-acid chain: Shikimate kinase 2 (174 aa).

Residue 12 to 17 (GCGKTT) coordinates ATP. Positions 16 and 32 each coordinate Mg(2+). Residues aspartate 34, arginine 58, and glycine 79 each coordinate substrate. The interval 112–126 (QAAPEEDLRPTLTGK) is LID domain. Arginine 120 lines the ATP pocket. Residue arginine 139 participates in substrate binding.

Belongs to the shikimate kinase family. AroL subfamily. In terms of assembly, monomer. It depends on Mg(2+) as a cofactor.

It localises to the cytoplasm. The catalysed reaction is shikimate + ATP = 3-phosphoshikimate + ADP + H(+). The protein operates within metabolic intermediate biosynthesis; chorismate biosynthesis; chorismate from D-erythrose 4-phosphate and phosphoenolpyruvate: step 5/7. Functionally, catalyzes the specific phosphorylation of the 3-hydroxyl group of shikimic acid using ATP as a cosubstrate. The protein is Shikimate kinase 2 of Shigella boydii serotype 4 (strain Sb227).